The primary structure comprises 265 residues: UDP-N-acetylenolpyruvoylglucosamine reductase (265 aa).

One can recognise an FAD-binding PCMH-type domain in the interval 15–169 (GVGGPAELWT…TRVRLKLKER (155 aa)). R149 is an active-site residue. Residues 182-203 (DRARKGQPKRKSAGCAFKNPPG) form a disordered region. C196 functions as the Proton donor in the catalytic mechanism.

It belongs to the MurB family. The cofactor is FAD.

The protein localises to the cytoplasm. It catalyses the reaction UDP-N-acetyl-alpha-D-muramate + NADP(+) = UDP-N-acetyl-3-O-(1-carboxyvinyl)-alpha-D-glucosamine + NADPH + H(+). It functions in the pathway cell wall biogenesis; peptidoglycan biosynthesis. Cell wall formation. The sequence is that of UDP-N-acetylenolpyruvoylglucosamine reductase from Thermus thermophilus (strain ATCC 27634 / DSM 579 / HB8).